Consider the following 337-residue polypeptide: U11/U12 small nuclear ribonucleoprotein 48 kDa protein (337 aa).

The segment at 55-82 (IAICPYDSNHRMPKSSLTKHMESCRLRK) adopts a CHHC U11-48K-type zinc-finger fold. Zn(2+)-binding residues include cysteine 58, histidine 64, histidine 74, and cysteine 78. Residues lysine 87 and lysine 104 each participate in a glycyl lysine isopeptide (Lys-Gly) (interchain with G-Cter in SUMO2) cross-link. Residues 255-276 (HWQEEQGRAGDAAEKNEERRSA) show a composition bias toward basic and acidic residues. Residues 255–337 (HWQEEQGRAG…HSHKRRKQKI (83 aa)) form a disordered region. The segment covering 294–310 (RHRRARSRSPHKRKRNK) has biased composition (basic residues). A compositionally biased stretch (basic and acidic residues) spans 311 to 326 (DKSSESRRRKERDGER). Positions 327 to 337 (HHSHKRRKQKI) are enriched in basic residues.

In terms of assembly, component of the U11/U12 snRNPs that are part of the U12-type spliceosome. Not found in the major spliceosome.

Its subcellular location is the nucleus. In terms of biological role, likely involved in U12-type 5' splice site recognition. The polypeptide is U11/U12 small nuclear ribonucleoprotein 48 kDa protein (Snrnp48) (Mus musculus (Mouse)).